Reading from the N-terminus, the 603-residue chain is Replication protein A 70 kDa DNA-binding subunit (603 aa).

The disordered stretch occupies residues 131–152 (PKPAVTSNSKPIAKKEPSHNNN). Ser160 carries the phosphoserine modification. The segment at residues 179-252 (WVIKARVTSK…QLKPANKQYS (74 aa)) is a DNA-binding region (OB). A Phosphoserine modification is found at Ser420. Residues 464–486 (CPQSDCNKKVVDEGNDQFRCEKC) form a C4-type zinc finger.

It belongs to the replication factor A protein 1 family. Component of the heterotrimeric canonical replication protein A complex (RPA).

The protein resides in the nucleus. Functionally, as part of the heterotrimeric replication protein A complex (RPA/RP-A), binds and stabilizes single-stranded DNA intermediates, that form during DNA replication or upon DNA stress. It prevents their reannealing and in parallel, recruits and activates different proteins and complexes involved in DNA metabolism. Thereby, it plays an essential role both in DNA replication and the cellular response to DNA damage. In Drosophila melanogaster (Fruit fly), this protein is Replication protein A 70 kDa DNA-binding subunit.